Consider the following 557-residue polypeptide: Phosphoribosylaminoimidazole carboxylase, chloroplastic (557 aa).

One can recognise an ATP-grasp domain in the interval 108-293 (KVALLPAWIP…QFEQHLPAVV (186 aa)). 132–189 (WDSLDIHFMIKSRRLAYDGRGNFVAKSEEELSSAVDALGGFDRGLYAEKWAPFVKELA) is a binding site for ATP. The tract at residues 387-557 (CSTLLGFIMG…HGWESYLKNS (171 aa)) is AIR carboxylase catalytic subunit.

In the C-terminal section; belongs to the AIR carboxylase family. Class I subfamily.

It is found in the plastid. It localises to the chloroplast. The catalysed reaction is 5-amino-1-(5-phospho-D-ribosyl)imidazole-4-carboxylate + H(+) = 5-amino-1-(5-phospho-beta-D-ribosyl)imidazole + CO2. It functions in the pathway purine metabolism; IMP biosynthesis via de novo pathway; 5-amino-1-(5-phospho-D-ribosyl)imidazole-4-carboxylate from 5-amino-1-(5-phospho-D-ribosyl)imidazole (carboxylase route): step 1/1. The sequence is that of Phosphoribosylaminoimidazole carboxylase, chloroplastic (PURKE) from Vigna aconitifolia (Moth bean).